We begin with the raw amino-acid sequence, 211 residues long: DNA dC-&gt;dU-editing enzyme APOBEC-3H (211 aa).

The region spanning 4-126 (LTAKTFSLQF…RRQQEGLRLL (123 aa)) is the CMP/dCMP-type deaminase domain. His54 contributes to the Zn(2+) binding site. The Proton donor role is filled by Glu56. Cys85 and Cys88 together coordinate Zn(2+).

Belongs to the cytidine and deoxycytidylate deaminase family. As to quaternary structure, homodimer. Zn(2+) serves as cofactor.

It localises to the cytoplasm. It carries out the reaction a 2'-deoxycytidine in single-stranded DNA + H2O + H(+) = a 2'-deoxyuridine in single-stranded DNA + NH4(+). Its function is as follows. DNA deaminase (cytidine deaminase) which may act as an inhibitor of retrovirus replication and retrotransposon mobility via deaminase-dependent and -independent mechanisms. The protein is DNA dC-&gt;dU-editing enzyme APOBEC-3H of Pongo pygmaeus (Bornean orangutan).